A 304-amino-acid chain; its full sequence is MHPEPAPPPNNSNPELPLSGGSSTSGSRRSRRRSGDGEPTGAPPLPPPPAVSYPDWIGQSYSEVMSLNEHSMQALSWRKLYLSRAKLKASSRTSALLSGFAMVAMVEVQLDTDHDYPPGLLIVFSACTTVLVAVHLFALMISTCILPNIEAVSNVHNLNSVKESPHERMHRHIELAWAFSTVIGTLLFLAEVVLLCWVKFLPLKRQAGQPSPTKPPTEPAVVVANSSNNGGITPGEAAAIASTAIMVPCGLVFIVFAVHFYRSLVSHKTDRQFQELNELAEFARLQDQLDHRGDHSLTPGTHYA.

Positions 1–11 (MHPEPAPPPNN) are enriched in pro residues. Positions 1–49 (MHPEPAPPPNNSNPELPLSGGSSTSGSRRSRRRSGDGEPTGAPPLPPPP) are disordered. Over 1–88 (MHPEPAPPPN…KLYLSRAKLK (88 aa)) the chain is Cytoplasmic. Residues 3–49 (PEPAPPPNNSNPELPLSGGSSTSGSRRSRRRSGDGEPTGAPPLPPPP) are required for generation of inwardly rectifying CRAC currents. The segment covering 12–27 (SNPELPLSGGSSTSGS) has biased composition (low complexity). An AKAP5 association region region spans residues 39-60 (PTGAPPLPPPPAVSYPDWIGQS). An interaction with STIM1 region spans residues 71–91 (SMQALSWRKLYLSRAKLKASS). The chain crosses the membrane as a helical span at residues 89–106 (ASSRTSALLSGFAMVAMV). The Extracellular segment spans residues 107 to 120 (EVQLDTDHDYPPGL). The chain crosses the membrane as a helical span at residues 121 to 141 (LIVFSACTTVLVAVHLFALMI). The Cytoplasmic segment spans residues 142–174 (STCILPNIEAVSNVHNLNSVKESPHERMHRHIE). A helical transmembrane segment spans residues 175 to 195 (LAWAFSTVIGTLLFLAEVVLL). Residues 196–237 (CWVKFLPLKRQAGQPSPTKPPTEPAVVVANSSNNGGITPGEA) lie on the Extracellular side of the membrane. Asn225 is a glycosylation site (N-linked (GlcNAc...) asparagine). A helical membrane pass occupies residues 238–258 (AAIASTAIMVPCGLVFIVFAV). The Cytoplasmic portion of the chain corresponds to 259 to 304 (HFYRSLVSHKTDRQFQELNELAEFARLQDQLDHRGDHSLTPGTHYA). Residues 275 to 295 (ELNELAEFARLQDQLDHRGDH) form an interaction with STIM1 region. Thr298 is subject to Phosphothreonine.

The protein belongs to the Orai family. In terms of assembly, oligomerizes in homomeric and heteromeric ORAI complexes. Native CRAC channels most likely consist of hexameric ORAI heteromers, implying that diverse ORAI1, ORAI2 and ORAI3 subunit combinations with distinct biophysical properties can operate in a cell-type specific way. ARC channels are heteropentamers consisting of three ORAI1 and two ORAI3 subunits. Interacts with STIM1 and STIM2; this regulates channel activity. Interacts with CALM; this may displace STIM1 and STIM2 and might thereby modulate channel activity. Interacts (via N-terminus) with AKAP5 upon store depletion. Interacts with CRACR2A/EFCAB4B; the interaction is direct and takes place in absence of Ca(2+). Forms a complex with CRACR2A/EFCAB4B and STIM1 at low concentration of Ca(2+), the complex dissociates at elevated Ca(2+) concentrations. Interacts with ASPH (isoform 8). Interacts with SLC35G1. Interacts with UBQLN1. Interacts with ADCY8; interaction is calcium store depletion independent; interaction occurs in membrane raft; interaction increases markedly after store depletion; positively regulates SOCE-induced adenylate cyclase activity; contributes to the targeting of ADCY8 to discrete regions of the plasma membrane that are shielded from other calcium events. Interacts with EFHB; the interaction takes place upon Ca(2+)-store depletion. Interacts (via N- and C-termini) with ATP2C2 (via N-terminus); this interaction regulates Ca(2+) influx at the plasma membrane. Interacts with TSPAN18; this interaction regulates ORAI1 exit from the endoplasmic (ER), and/or Golgi, and trafficking to the cell surface. In terms of processing, N-glycosylated. N-glycosylation inhibits channel activity in T cells. Ubiquitinated. Post-translationally, cys-195 is oxidated, leading to inactivation of channel activity.

The protein localises to the cell membrane. Its subcellular location is the basolateral cell membrane. The catalysed reaction is Ca(2+)(in) = Ca(2+)(out). Its activity is regulated as follows. Oxidation at Cys-196 leads to inactivation of channel activity. Functionally, pore-forming subunit of two major inward rectifying Ca(2+) channels at the plasma membrane: Ca(2+) release-activated Ca(2+) (CRAC) channels and arachidonate-regulated Ca(2+)-selective (ARC) channels. Assembles with ORAI2 and ORAI3 to form hexameric CRAC channels that mediate Ca(2+) influx upon depletion of endoplasmic reticulum Ca(2+) store and channel activation by Ca(2+) sensor STIM1, a process known as store-operated Ca(2+) entry (SOCE). Various pore subunit combinations may account for distinct CRAC channel spatiotemporal and cell-type specific dynamics. ORAI1 mainly contributes to the generation of Ca(2+) plateaus involved in sustained Ca(2+) entry and is dispensable for cytosolic Ca(2+) oscillations, whereas ORAI2 and ORAI3 generate oscillatory patterns. CRAC channels assemble in Ca(2+) signaling microdomains where Ca(2+) influx is coupled to calmodulin and calcineurin signaling and activation of NFAT transcription factors recruited to ORAI1 via AKAP5. Activates NFATC2/NFAT1 and NFATC3/NFAT4-mediated transcriptional responses. CRAC channels are the main pathway for Ca(2+) influx in T cells and promote the immune response to pathogens by activating NFAT-dependent cytokine and chemokine transcription. Assembles with ORAI3 to form channels that mediate store-independent Ca(2+) influx in response to inflammatory metabolites arachidonate or its derivative leukotriene C4, termed ARC and LRC channels respectively. Plays a prominent role in Ca(2+) influx at the basolateral membrane of mammary epithelial cells independently of the Ca(2+) content of endoplasmic reticulum or Golgi stores. May mediate transepithelial transport of large quantities of Ca(2+) for milk secretion. The polypeptide is Calcium release-activated calcium channel protein 1 (Orai1) (Rattus norvegicus (Rat)).